The following is a 556-amino-acid chain: Arginine--tRNA ligase (556 aa).

Positions 132-142 match the 'HIGH' region motif; sequence ANPTGDLHLGH.

This sequence belongs to the class-I aminoacyl-tRNA synthetase family. Monomer.

The protein localises to the cytoplasm. The catalysed reaction is tRNA(Arg) + L-arginine + ATP = L-arginyl-tRNA(Arg) + AMP + diphosphate. In Listeria monocytogenes serotype 4b (strain F2365), this protein is Arginine--tRNA ligase.